Consider the following 198-residue polypeptide: Recombination protein RecR (198 aa).

The C4-type zinc-finger motif lies at 57-72; it reads CSICGRLTDDDPCSIC. One can recognise a Toprim domain in the interval 80–175; it reads TTILVLEDSR…KVTRLARGLA (96 aa).

Belongs to the RecR family.

May play a role in DNA repair. It seems to be involved in an RecBC-independent recombinational process of DNA repair. It may act with RecF and RecO. In Streptococcus pneumoniae (strain 70585), this protein is Recombination protein RecR.